The sequence spans 602 residues: Oligoendopeptidase F, chromosomal (602 aa).

H388 provides a ligand contact to Zn(2+). E389 is an active-site residue. 2 residues coordinate Zn(2+): H392 and H395.

The protein belongs to the peptidase M3B family. Zn(2+) serves as cofactor.

Functionally, hydrolyzes peptides containing between 7 and 17 amino acids with a rather wide specificity. The polypeptide is Oligoendopeptidase F, chromosomal (pepF2) (Lactococcus lactis subsp. cremoris (Streptococcus cremoris)).